The chain runs to 229 residues: Putative N-acetylmannosamine-6-phosphate 2-epimerase 2 (229 aa).

It belongs to the NanE family.

It catalyses the reaction an N-acyl-D-glucosamine 6-phosphate = an N-acyl-D-mannosamine 6-phosphate. Its pathway is amino-sugar metabolism; N-acetylneuraminate degradation; D-fructose 6-phosphate from N-acetylneuraminate: step 3/5. Converts N-acetylmannosamine-6-phosphate (ManNAc-6-P) to N-acetylglucosamine-6-phosphate (GlcNAc-6-P). This is Putative N-acetylmannosamine-6-phosphate 2-epimerase 2 (nanE2) from Salmonella typhimurium (strain LT2 / SGSC1412 / ATCC 700720).